A 326-amino-acid polypeptide reads, in one-letter code: Tetraketide alpha-pyrone reductase 1 (326 aa).

NADP(+) contacts are provided by residues 8–32 (VCVT…GYEV), Lys44, and Tyr162.

This sequence belongs to the NAD(P)-dependent epimerase/dehydratase family. Dihydroflavonol-4-reductase subfamily. Interacts with 4CLL1/ACOS5, PKSA and PKSB. Specifically expressed in anther tapetal cells during microspores development.

Its subcellular location is the cytoplasm. It is found in the nucleus. The protein localises to the endoplasmic reticulum. Functionally, involved in the biosynthesis of hydroxylated tetraketide compounds that serve as sporopollenin precursors (the main constituents of exine). Is essential for pollen wall development. Acts on tetraketide alpha-pyrones and reduces the carbonyl function on the tetraketide alkyl chain to a secondary alcohol function. The chain is Tetraketide alpha-pyrone reductase 1 (TKPR1) from Arabidopsis thaliana (Mouse-ear cress).